We begin with the raw amino-acid sequence, 1710 residues long: Ankyrin repeat domain-containing protein 26 (1710 aa).

A disordered region spans residues 1–41 (MKKIFSKKGESPLGSFARRQRSSAGGGGEPGEGAYSQPGYH). Phosphoserine occurs at positions 11 and 15. ANK repeat units follow at residues 45 to 75 (RDLG…GLND), 79 to 108 (MNRT…QLNV), 112 to 141 (ENRT…DPNL), 145 to 174 (HGNT…NIEA), and 178 to 207 (DDLT…NVNA). The interval 222 to 274 (KEERIPKHSSQNSNSVDESSEDSLSRLSGKPGVDDSWPTSDDEDLNFDTKNVP) is disordered. 4 positions are modified to phosphoserine: Ser241, Ser261, Ser489, and Ser530. Residues 504–630 (DSVPNKAGGM…EKRTSKESVN (127 aa)) are disordered. Positions 529-566 (ASEEEQEREGSENNQPQVEEERKKHRNNEMEVSANIHD) form a coiled coil. The segment covering 569–580 (TDDAEDDDDDDG) has biased composition (acidic residues). Composition is skewed to basic and acidic residues over residues 586 to 602 (KSGE…ENKE) and 613 to 626 (KEVK…RTSK). The residue at position 631 (Ser631) is a Phosphoserine. Over residues 650–660 (DSSLSEIDEDE) the composition is skewed to acidic residues. The tract at residues 650–698 (DSSLSEIDEDEGRPTKKTSNEKNKVKNQIQSMDDVDDLTQSSETASEDC) is disordered. Residues 661 to 673 (GRPTKKTSNEKNK) are compositionally biased toward basic and acidic residues. Coiled coils occupy residues 743-873 (KNHC…NARM), 905-1472 (EEEK…MVEL), 1517-1587 (NNFA…NTKL), and 1649-1674 (LSKM…LESG). A disordered region spans residues 892 to 912 (AQKKMNSENSHSHEEEKDLSH).

In terms of assembly, interacts with TRIO. Interacts with GPS2. Interacts with CCDC85B. Interacts with HMMR.

Its function is as follows. Acts as a regulator of adipogenesis. Involved in the regulation of the feeding behavior. This Homo sapiens (Human) protein is Ankyrin repeat domain-containing protein 26.